The chain runs to 586 residues: Ferredoxin--nitrite reductase, chloroplastic (586 aa).

Low complexity predominate over residues 1 to 18; the sequence is MTSFSLTFTSPLLPSSST. The tract at residues 1 to 20 is disordered; that stretch reads MTSFSLTFTSPLLPSSSTKP. The N-terminal 25 residues, 1–25, are a transit peptide targeting the chloroplast; the sequence is MTSFSLTFTSPLLPSSSTKPKRSVL. Lys-103 participates in a covalent cross-link: Glycyl lysine isopeptide (Lys-Gly) (interchain with G-Cter in ubiquitin). Positions 464, 470, 505, and 509 each coordinate [4Fe-4S] cluster. Cys-509 is a binding site for siroheme.

This sequence belongs to the nitrite and sulfite reductase 4Fe-4S domain family. As to quaternary structure, monomer. Siroheme is required as a cofactor. Requires [4Fe-4S] cluster as cofactor.

It is found in the plastid. The protein localises to the chloroplast. The enzyme catalyses 6 oxidized [2Fe-2S]-[ferredoxin] + NH4(+) + 2 H2O = nitrite + 6 reduced [2Fe-2S]-[ferredoxin] + 8 H(+). Its pathway is nitrogen metabolism; nitrate reduction (assimilation). In terms of biological role, catalyzes the six-electron reduction of nitrite to ammonium. The chain is Ferredoxin--nitrite reductase, chloroplastic (NIR1) from Arabidopsis thaliana (Mouse-ear cress).